The chain runs to 914 residues: Scaffold attachment factor B1 (914 aa).

A compositionally biased stretch (low complexity) spans 1-24 (MAETLSGLGDSGAAGAAALSSASS). The segment at 1–33 (MAETLSGLGDSGAAGAAALSSASSETGTRRLSD) is disordered. A2 carries the post-translational modification N-acetylalanine. A phosphoserine mark is found at S24 and S55. An SAP domain is found at 31 to 65 (LSDLRVIDLRAELRKRNVDSSGNKSVLMERLKKAI). Residues 64–117 (AIEDEGGNPDEIEITSEGNKKTSKRSSKGRKPEEEGVEDNGLEENSGDGQEDVE) are disordered. The segment covering 67–77 (DEGGNPDEIEI) has biased composition (acidic residues). Residue S79 is modified to Phosphoserine. The segment covering 98-117 (EGVEDNGLEENSGDGQEDVE) has biased composition (acidic residues). Glycyl lysine isopeptide (Lys-Gly) (interchain with G-Cter in SUMO2) cross-links involve residues K172 and K186. Phosphothreonine is present on T188. Phosphoserine occurs at positions 195, 197, and 209. The tract at residues 221-407 (LGETCKSEPV…EKGRSSCGRN (187 aa)) is disordered. Over residues 225–234 (CKSEPVKEES) the composition is skewed to basic and acidic residues. K231 is covalently cross-linked (Glycyl lysine isopeptide (Lys-Gly) (interchain with G-Cter in SUMO)). Polar residues predominate over residues 275 to 286 (SESTAHAQSSKA). Residues 293 to 309 (VKREPAEQPGDGERTDC) show a composition bias toward basic and acidic residues. A Glycyl lysine isopeptide (Lys-Gly) (interchain with G-Cter in SUMO) cross-link involves residue K294. The span at 319–330 (EQSSAASELAEA) shows a compositional bias: low complexity. The span at 346 to 359 (EARDSKEDGRKFDF) shows a compositional bias: basic and acidic residues. Over residues 371 to 383 (ESSTSEGADQKMS) the composition is skewed to polar residues. K381 is covalently cross-linked (Glycyl lysine isopeptide (Lys-Gly) (interchain with G-Cter in SUMO2)). Residues S383 and S384 each carry the phosphoserine modification. The span at 390–401 (DTKRLSKEEKGR) shows a compositional bias: basic and acidic residues. Residue K392 forms a Glycyl lysine isopeptide (Lys-Gly) (interchain with G-Cter in SUMO2) linkage. One can recognise an RRM domain in the interval 406–484 (RNFWVSGLSS…KMISVEKAKN (79 aa)). S415 bears the Phosphoserine mark. Composition is skewed to basic and acidic residues over residues 477–551 (ISVE…ERSR) and 559–570 (GTERTVVMDKSK). Disordered regions lie at residues 477 to 636 (ISVE…QAQW), 670 to 706 (RERM…QERR), and 748 to 914 (FDHR…TRRY). Glycyl lysine isopeptide (Lys-Gly) (interchain with G-Cter in SUMO2) cross-links involve residues K483, K514, K543, and K570. The interaction with POLR2A; SFRS1; SFRS9 and SFRS10 stretch occupies residues 528-791 (GDDGSGEKSK…RHGGPERHGR (264 aa)). A Glycyl lysine isopeptide (Lys-Gly) (interchain with G-Cter in SUMO1); alternate cross-link involves residue K578. A Glycyl lysine isopeptide (Lys-Gly) (interchain with G-Cter in SUMO2); alternate cross-link involves residue K578. A phosphoserine mark is found at S580, S582, S601, and S604. Positions 581–636 (GSKERASKSLDRKSASREKRSVVSFDKVKEPRKSRDSESHRVRERSEREQRMQAQW) are enriched in basic and acidic residues. Residues 599–616 (KRSVVSFDKVKEPRKSRD) carry the Nuclear localization signal motif. Residues 599–914 (KRSVVSFDKV…PSDARFTRRY (316 aa)) form an interaction with SAFB2 region. N6-acetyllysine is present on K607. Residues 748 to 795 (FDHRDRGRYPDHSVDRREGSRSMMGEREGQHYPERHGGPERHGRDSRD) are compositionally biased toward basic and acidic residues. Position 810 is an omega-N-methylarginine (R810). Composition is skewed to basic and acidic residues over residues 816–831 (PRRD…DDRA) and 840–850 (MMDRDHKRWQG). K846 participates in a covalent cross-link: Glycyl lysine isopeptide (Lys-Gly) (interchain with G-Cter in SUMO2). Asymmetric dimethylarginine is present on residues R867, R873, and R883. Over residues 891 to 900 (GMQGGFGGQS) the composition is skewed to gly residues. Residues 904 to 914 (RPSDARFTRRY) show a composition bias toward basic and acidic residues.

In terms of assembly, monomer and homodimer. Interacts with KHDRBS3. Interacts with CLK2. Interacts with POLR2A, ASF/SRSF1, SRp30c/SRFS9 and TRA2B/SFRS10. Interacts with SRPK1 and inhibits its activity. Interacts with RBMX. Interacts with FUS. Interacts with ZBED4. Sumoylated by PIAS1 with SUMO1 and SUMO2/3, desumoylated by SENP1. Sumoylation is required for transcriptional repressor activity.

Its subcellular location is the nucleus. Functionally, binds to scaffold/matrix attachment region (S/MAR) DNA and forms a molecular assembly point to allow the formation of a 'transcriptosomal' complex (consisting of SR proteins and RNA polymerase II) coupling transcription and RNA processing. Functions as an estrogen receptor corepressor and can also bind to the HSP27 promoter and decrease its transcription. Thereby acts as a negative regulator of cell proliferation. When associated with RBMX, binds to and stimulates transcription from the SREBF1 promoter. This is Scaffold attachment factor B1 (SAFB) from Pongo abelii (Sumatran orangutan).